The primary structure comprises 51 residues: Ribosome biogenesis protein Nop10 (51 aa).

Belongs to the NOP10 family.

Its function is as follows. Involved in ribosome biogenesis; more specifically in 18S rRNA pseudouridylation and in cleavage of pre-rRNA. The sequence is that of Ribosome biogenesis protein Nop10 from Methanosarcina barkeri (strain Fusaro / DSM 804).